Here is a 68-residue protein sequence, read N- to C-terminus: Large ribosomal subunit protein bL31 (68 aa).

Zn(2+)-binding residues include cysteine 17, cysteine 19, cysteine 37, and cysteine 40.

Belongs to the bacterial ribosomal protein bL31 family. Type A subfamily. As to quaternary structure, part of the 50S ribosomal subunit. It depends on Zn(2+) as a cofactor.

Binds the 23S rRNA. The polypeptide is Large ribosomal subunit protein bL31 (Clostridium perfringens (strain ATCC 13124 / DSM 756 / JCM 1290 / NCIMB 6125 / NCTC 8237 / Type A)).